Consider the following 120-residue polypeptide: Small ribosomal subunit protein eS24 (120 aa).

The segment at 101-120 (RDAGTKQKKGGSKGGQGAKG) is disordered.

The protein belongs to the eukaryotic ribosomal protein eS24 family.

The sequence is that of Small ribosomal subunit protein eS24 from Saccharolobus islandicus (strain M.16.4 / Kamchatka #3) (Sulfolobus islandicus).